The sequence spans 586 residues: Assimilatory ferredoxin-dependent nitrite reductase (586 aa).

[4Fe-4S] cluster-binding residues include Cys-411, Cys-417, Cys-455, and Cys-459. Cys-459 provides a ligand contact to siroheme. The disordered stretch occupies residues 566-586 (SWYPFADEDEPPKTEQPMTSD).

The protein belongs to the nitrite and sulfite reductase 4Fe-4S domain family. As to quaternary structure, monomer. Siroheme is required as a cofactor. Requires [4Fe-4S] cluster as cofactor.

It carries out the reaction 6 oxidized [2Fe-2S]-[ferredoxin] + NH4(+) + 2 H2O = nitrite + 6 reduced [2Fe-2S]-[ferredoxin] + 8 H(+). The protein operates within nitrogen metabolism; nitrate reduction (assimilation). Its activity is regulated as follows. Inhibited by cyanide and azide. Functionally, catalyzes the reduction of nitrite to ammonium in the nitrate assimilation pathway, using ferredoxin as the electron donor. Can use reduced methyl viologen but neither NADPH nor NADH as electron donors. The sequence is that of Assimilatory ferredoxin-dependent nitrite reductase from Haloferax mediterranei (strain ATCC 33500 / DSM 1411 / JCM 8866 / NBRC 14739 / NCIMB 2177 / R-4) (Halobacterium mediterranei).